Consider the following 145-residue polypeptide: Large ribosomal subunit protein uL11 (145 aa).

This sequence belongs to the universal ribosomal protein uL11 family. In terms of assembly, part of the ribosomal stalk of the 50S ribosomal subunit. Interacts with L10 and the large rRNA to form the base of the stalk. L10 forms an elongated spine to which L12 dimers bind in a sequential fashion forming a multimeric L10(L12)X complex. In terms of processing, one or more lysine residues are methylated.

Functionally, forms part of the ribosomal stalk which helps the ribosome interact with GTP-bound translation factors. This is Large ribosomal subunit protein uL11 from Flavobacterium johnsoniae (strain ATCC 17061 / DSM 2064 / JCM 8514 / BCRC 14874 / CCUG 350202 / NBRC 14942 / NCIMB 11054 / UW101) (Cytophaga johnsonae).